Here is a 381-residue protein sequence, read N- to C-terminus: MESIGVVAPHTMHFAEPLRLQSGSVLGNYQLVVETYGELNAARSNAVLVCHALNASHHVAGVYADDPRSTGWWDNMVGPGKPLDTNRFFVIGVNNLGSCFGSTGPMSIDPATGTPYGARFPVVTVEDWVHAQARVADAFGIERFAAVMGGSLGGMQALAWSLLYPERVAHCIDIASTPKLSAQNIAFNEVARSAILSDPDFHGGDYYAHGVKPRRGLRVARMIGHITYLSDDDMAEKFGRALRRADGALDAYNFNFDVEFEVESYLRYQGDKFADYFDANTYLLITRALDYFDPAKAFNGNLSAALAHTKAKYLVASFTTDWRFAPARSREIVKALLDNRRSVSYAEIDAPHGHDAFLLDDARYHNLVRAYYERIAEEVGA.

The 316-residue stretch at 45–360 (NAVLVCHALN…PHGHDAFLLD (316 aa)) folds into the AB hydrolase-1 domain. The Nucleophile role is filled by Ser-151. Arg-221 is a binding site for substrate. Catalysis depends on residues Asp-321 and His-354. Position 355 (Asp-355) interacts with substrate.

The protein belongs to the AB hydrolase superfamily. MetX family. In terms of assembly, homodimer.

The protein resides in the cytoplasm. The catalysed reaction is L-homoserine + succinyl-CoA = O-succinyl-L-homoserine + CoA. Its pathway is amino-acid biosynthesis; L-methionine biosynthesis via de novo pathway; O-succinyl-L-homoserine from L-homoserine: step 1/1. Functionally, transfers a succinyl group from succinyl-CoA to L-homoserine, forming succinyl-L-homoserine. The polypeptide is Homoserine O-succinyltransferase (Burkholderia thailandensis (strain ATCC 700388 / DSM 13276 / CCUG 48851 / CIP 106301 / E264)).